The following is a 288-amino-acid chain: HTH-type transcriptional regulator CzcR (288 aa).

An HTH lysR-type domain is found at 1–58 (MELRDLQIFQSVADQGSVSSAAKELNYVQSNVTTRIKQLENELKTPLFYRHKRGMTLT). Positions 18–37 (VSSAAKELNYVQSNVTTRIK) form a DNA-binding region, H-T-H motif.

This sequence belongs to the LysR transcriptional regulatory family.

This Bacillus thuringiensis subsp. konkukian (strain 97-27) protein is HTH-type transcriptional regulator CzcR (czcR).